Reading from the N-terminus, the 242-residue chain is Enolase-phosphatase E1 (242 aa).

This sequence belongs to the HAD-like hydrolase superfamily. MasA/MtnC family. As to quaternary structure, monomer. It depends on Mg(2+) as a cofactor.

The catalysed reaction is 5-methylsulfanyl-2,3-dioxopentyl phosphate + H2O = 1,2-dihydroxy-5-(methylsulfanyl)pent-1-en-3-one + phosphate. Its pathway is amino-acid biosynthesis; L-methionine biosynthesis via salvage pathway; L-methionine from S-methyl-5-thio-alpha-D-ribose 1-phosphate: step 3/6. It functions in the pathway amino-acid biosynthesis; L-methionine biosynthesis via salvage pathway; L-methionine from S-methyl-5-thio-alpha-D-ribose 1-phosphate: step 4/6. In terms of biological role, bifunctional enzyme that catalyzes the enolization of 2,3-diketo-5-methylthiopentyl-1-phosphate (DK-MTP-1-P) into the intermediate 2-hydroxy-3-keto-5-methylthiopentenyl-1-phosphate (HK-MTPenyl-1-P), which is then dephosphorylated to form the acireductone 1,2-dihydroxy-3-keto-5-methylthiopentene (DHK-MTPene). In Synechococcus sp. (strain WH7803), this protein is Enolase-phosphatase E1.